We begin with the raw amino-acid sequence, 461 residues long: Argininosuccinate lyase (461 aa).

This sequence belongs to the lyase 1 family. Argininosuccinate lyase subfamily.

Its subcellular location is the cytoplasm. The enzyme catalyses 2-(N(omega)-L-arginino)succinate = fumarate + L-arginine. It participates in amino-acid biosynthesis; L-arginine biosynthesis; L-arginine from L-ornithine and carbamoyl phosphate: step 3/3. In Nitrosomonas europaea (strain ATCC 19718 / CIP 103999 / KCTC 2705 / NBRC 14298), this protein is Argininosuccinate lyase.